A 527-amino-acid polypeptide reads, in one-letter code: Sensory neuron membrane protein 1 (527 aa).

Over 1–10 the chain is Cytoplasmic; it reads MQLQKPLKIG. Residues 11–31 traverse the membrane as a helical segment; it reads LGMMGAGLFGIIFGWVLFPVI. The Extracellular portion of the chain corresponds to 32–456; the sequence is LKSQLKKEMA…LKNQLFIPKR (425 aa). N-linked (GlcNAc...) asparagine glycosylation is found at asparagine 67 and asparagine 229. Disulfide bonds link cysteine 268–cysteine 333, cysteine 297–cysteine 352, and cysteine 335–cysteine 341. Asparagine 440 is a glycosylation site (N-linked (GlcNAc...) asparagine). A helical membrane pass occupies residues 457–477; sequence IVSVVKWLLAGVGFVGLVGSL. At 478-527 the chain is on the cytoplasmic side; that stretch reads VYQFKGKMINFALSPSSAPVTKVNPEINQQNQPKDISIIGESQNPPKVDM.

Belongs to the CD36 family. As to expression, principal component of the olfactory cilia membrane. Localizes to the antennal tissue with two to three fold higher expression in males compared to females.

The protein resides in the cell membrane. Functionally, plays an olfactory role that is not restricted to pheromone sensitivity. The sequence is that of Sensory neuron membrane protein 1 from Ostrinia nubilalis (European corn borer).